A 166-amino-acid chain; its full sequence is Orotate phosphoribosyltransferase (166 aa).

Residues Arg83, Lys84, His89, and 109 to 117 contribute to the 5-phospho-alpha-D-ribose 1-diphosphate site; that span reads DDVATTGGS. Thr113 and Arg141 together coordinate orotate.

It belongs to the purine/pyrimidine phosphoribosyltransferase family. PyrE subfamily. As to quaternary structure, homodimer. It depends on Mg(2+) as a cofactor.

The enzyme catalyses orotidine 5'-phosphate + diphosphate = orotate + 5-phospho-alpha-D-ribose 1-diphosphate. The protein operates within pyrimidine metabolism; UMP biosynthesis via de novo pathway; UMP from orotate: step 1/2. Its function is as follows. Catalyzes the transfer of a ribosyl phosphate group from 5-phosphoribose 1-diphosphate to orotate, leading to the formation of orotidine monophosphate (OMP). This is Orotate phosphoribosyltransferase from Picrophilus torridus (strain ATCC 700027 / DSM 9790 / JCM 10055 / NBRC 100828 / KAW 2/3).